Here is a 273-residue protein sequence, read N- to C-terminus: Ethanolamine ammonia-lyase small subunit (273 aa).

Adenosylcob(III)alamin contacts are provided by Val-164, Glu-185, and Cys-214.

This sequence belongs to the EutC family. The basic unit is a heterodimer which dimerizes to form tetramers. The heterotetramers trimerize; 6 large subunits form a core ring with 6 small subunits projecting outwards. Adenosylcob(III)alamin serves as cofactor.

Its subcellular location is the bacterial microcompartment. It catalyses the reaction ethanolamine = acetaldehyde + NH4(+). The protein operates within amine and polyamine degradation; ethanolamine degradation. Functionally, catalyzes the deamination of various vicinal amino-alcohols to oxo compounds. Allows this organism to utilize ethanolamine as the sole source of nitrogen and carbon in the presence of external vitamin B12. This is Ethanolamine ammonia-lyase small subunit from Pseudomonas aeruginosa (strain LESB58).